A 515-amino-acid polypeptide reads, in one-letter code: Protein translocase subunit SecD (515 aa).

A run of 6 helical transmembrane segments spans residues 5–25, 353–373, 375–395, 398–418, 450–470, and 477–497; these read LIAKLLLIAAVIGFCIHLATP, KGILSVTIGMALVLLFMVAYY, LSGLLANMALLMNLIILMGLL, FGATLTLPGIAGIILTIGIAV, FSTILDANITTLIVAVILFQF, and GFAVTLSIGILASMFTAILCT.

This sequence belongs to the SecD/SecF family. SecD subfamily. As to quaternary structure, forms a complex with SecF. Part of the essential Sec protein translocation apparatus which comprises SecA, SecYEG and auxiliary proteins SecDF. Other proteins may also be involved.

It localises to the cell inner membrane. Part of the Sec protein translocase complex. Interacts with the SecYEG preprotein conducting channel. SecDF uses the proton motive force (PMF) to complete protein translocation after the ATP-dependent function of SecA. The chain is Protein translocase subunit SecD from Desulfurispirillum indicum (strain ATCC BAA-1389 / DSM 22839 / S5).